Here is a 448-residue protein sequence, read N- to C-terminus: Protein chibby homolog 2 (448 aa).

Ser-41, Ser-86, Ser-89, Ser-97, Ser-124, Ser-144, Ser-148, and Ser-150 each carry phosphoserine. The stretch at 163–198 (AKEFVLQEENKSLREENKALREENRMLRKENKILQV) forms a coiled coil. The segment at 206-226 (SLGREESRPPSPLPQKDSASL) is disordered. A phosphoserine mark is found at Ser-212 and Ser-225. Residues 242-267 (KEDSTLQLLREENRALQQLLEQKQAY) are a coiled coil. A disordered region spans residues 270-321 (QTEDAAAPAEESKPAPSPHEEPCSPGLLQDQGSGLSSHFEEPRGPPAPQEDS). Positions 279–291 (EESKPAPSPHEEP) are enriched in basic and acidic residues. Residues Ser-335 and Ser-338 each carry the phosphoserine modification. Residues 356 to 414 (LQLLREMRQALQALLKENRLLQEENRTLQVLRAEHRGFQEENKALWENNKLKLQQKLVI) are a coiled coil.

This sequence belongs to the chibby family. SPERT subfamily. Homodimer. Binds to NEK1.

This chain is Protein chibby homolog 2 (CBY2), found in Macaca fascicularis (Crab-eating macaque).